Here is a 363-residue protein sequence, read N- to C-terminus: Zinc finger protein 830 (363 aa).

Ala-2 is modified (N-acetylalanine). Positions 16-40 (VNQEELRRLMREKQRLSTNRKRIES) form a coiled coil. The C2H2-type zinc-finger motif lies at 53 to 75 (CALCNTPVKSELLWQTHVLGKQH). Residues 81-213 (ELKGAKGATQ…NPPKAPLVPH (133 aa)) are disordered. The span at 90–99 (QGPSTGTVPQ) shows a compositional bias: polar residues. The span at 104–115 (RATDVESQDAKK) shows a compositional bias: basic and acidic residues. Residues 129-143 (SASSANLDAARAAPS) show a composition bias toward low complexity. The segment covering 152–164 (DYDDEEEEEEEGG) has biased composition (acidic residues). Positions 165-184 (GEERRDSSKHLPDAQGKEHS) are enriched in basic and acidic residues. Residues 189–205 (RETTSNVLPNDPFNTNP) are compositionally biased toward polar residues. Phosphoserine is present on Ser-216. The stretch at 303–331 (IECYRRVEKLRNRQDEIKNKLKEVLTIKE) forms a coiled coil. Residues Ser-342 and Ser-353 each carry the phosphoserine modification.

In terms of assembly, component of the XAB2 complex, a multimeric protein complex composed of XAB2, PRPF19, AQR, ZNF830, ISY1, and PPIE; this complex binds preferentially to RNA. Interacts with XAB2. Identified in a pentameric intron-binding (IB) complex composed of AQR, XAB2, ISY1, ZNF830 and PPIE that is incorporated into the spliceosome as a preassembled complex. The IB complex does not contain PRPF19. In terms of processing, phosphorylated in response to DNA damage by the cell cycle checkpoint kinases ATR/ATM. In terms of tissue distribution, widely expressed at low level. Expressed in oocytes from primordial to antral follicles. Also detected in somatic cells of the ovary, namely, in granulosa cells from the pre-antral follicle stage onward.

The protein resides in the nucleus. It localises to the chromosome. It is found in the nucleus speckle. May play a role in pre-mRNA splicing as component of the spliceosome. Acts as an important regulator of the cell cycle that participates in the maintenance of genome integrity. During cell cycle progression in embryonic fibroblast, prevents replication fork collapse, double-strand break formation and cell cycle checkpoint activation. Controls mitotic cell cycle progression and cell survival in rapidly proliferating intestinal epithelium and embryonic stem cells. During the embryo preimplantation, controls different aspects of M phase. During early oocyte growth, plays a role in oocyte survival by preventing chromosomal breaks formation, activation of TP63 and reduction of transcription. The protein is Zinc finger protein 830 of Mus musculus (Mouse).